The primary structure comprises 228 residues: 7-cyano-7-deazaguanine synthase (228 aa).

9-19 is an ATP binding site; sequence LSGGPDSTTVL. Zn(2+) contacts are provided by Cys193, Cys203, Cys206, and Cys209.

The protein belongs to the QueC family. Zn(2+) is required as a cofactor.

It catalyses the reaction 7-carboxy-7-deazaguanine + NH4(+) + ATP = 7-cyano-7-deazaguanine + ADP + phosphate + H2O + H(+). It functions in the pathway purine metabolism; 7-cyano-7-deazaguanine biosynthesis. Catalyzes the ATP-dependent conversion of 7-carboxy-7-deazaguanine (CDG) to 7-cyano-7-deazaguanine (preQ(0)). In Rickettsia peacockii (strain Rustic), this protein is 7-cyano-7-deazaguanine synthase.